Here is an 851-residue protein sequence, read N- to C-terminus: DNA mismatch repair protein MutS (851 aa).

602–609 contributes to the ATP binding site; that stretch reads GPNMSGKS.

It belongs to the DNA mismatch repair MutS family.

Functionally, this protein is involved in the repair of mismatches in DNA. It is possible that it carries out the mismatch recognition step. This protein has a weak ATPase activity. This chain is DNA mismatch repair protein MutS, found in Streptococcus pyogenes serotype M18 (strain MGAS8232).